We begin with the raw amino-acid sequence, 689 residues long: Methionine--tRNA ligase (689 aa).

Residues 19–29 (PYPTGDLHIGH) carry the 'HIGH' region motif. Zn(2+)-binding residues include C150, C153, C162, and C166. Residues 338–342 (GLSTS) carry the 'KMSKS' region motif. T341 contributes to the ATP binding site. Positions 591–689 (EFQALDLRVG…EDSEPGTKVM (99 aa)) constitute a tRNA-binding domain.

Belongs to the class-I aminoacyl-tRNA synthetase family. MetG type 1 subfamily. In terms of assembly, homodimer. The cofactor is Zn(2+).

It is found in the cytoplasm. It catalyses the reaction tRNA(Met) + L-methionine + ATP = L-methionyl-tRNA(Met) + AMP + diphosphate. In terms of biological role, is required not only for elongation of protein synthesis but also for the initiation of all mRNA translation through initiator tRNA(fMet) aminoacylation. The protein is Methionine--tRNA ligase of Halobacterium salinarum (strain ATCC 700922 / JCM 11081 / NRC-1) (Halobacterium halobium).